We begin with the raw amino-acid sequence, 337 residues long: Anaerobic sulfite reductase subunit C (337 aa).

[4Fe-4S] cluster contacts are provided by Cys-115, Cys-121, Cys-153, Cys-157, Cys-180, Cys-183, Cys-186, Cys-190, Cys-212, Cys-215, Cys-218, and Cys-222. Residue Cys-157 coordinates siroheme. 4Fe-4S ferredoxin-type domains follow at residues 171-200 (AKMRFTADRCIGCGACVKACSHHAVGCLAL) and 203-232 (GKAVKEESACIGCGECVLACPTLAWQRKPD).

Belongs to the nitrite and sulfite reductase 4Fe-4S domain family. In terms of assembly, the anaerobic sulfite reductase seems to consist of three subunits. It depends on [4Fe-4S] cluster as a cofactor. The cofactor is siroheme.

It is found in the cytoplasm. It catalyses the reaction hydrogen sulfide + 3 NAD(+) + 3 H2O = sulfite + 3 NADH + 4 H(+). The protein operates within sulfur metabolism; sulfite reduction. In terms of biological role, this enzyme catalyzes the hydrogen sulfide production from sulfite. It is strictly anaerobic. It is regulated by electron acceptors rather than by cysteine. The chain is Anaerobic sulfite reductase subunit C (asrC) from Salmonella typhi.